Reading from the N-terminus, the 494-residue chain is Guanosine-5'-triphosphate,3'-diphosphate pyrophosphatase (494 aa).

Belongs to the GppA/Ppx family. GppA subfamily.

The catalysed reaction is guanosine 3'-diphosphate 5'-triphosphate + H2O = guanosine 3',5'-bis(diphosphate) + phosphate + H(+). It participates in purine metabolism; ppGpp biosynthesis; ppGpp from GTP: step 2/2. Its function is as follows. Catalyzes the conversion of pppGpp to ppGpp. Guanosine pentaphosphate (pppGpp) is a cytoplasmic signaling molecule which together with ppGpp controls the 'stringent response', an adaptive process that allows bacteria to respond to amino acid starvation, resulting in the coordinated regulation of numerous cellular activities. This chain is Guanosine-5'-triphosphate,3'-diphosphate pyrophosphatase, found in Escherichia coli O127:H6 (strain E2348/69 / EPEC).